A 495-amino-acid chain; its full sequence is ATP synthase subunit beta (495 aa).

178–185 (GGAGVGKT) is an ATP binding site.

This sequence belongs to the ATPase alpha/beta chains family. F-type ATPases have 2 components, CF(1) - the catalytic core - and CF(0) - the membrane proton channel. CF(1) has five subunits: alpha(3), beta(3), gamma(1), delta(1), epsilon(1). CF(0) has three main subunits: a(1), b(2) and c(9-12). The alpha and beta chains form an alternating ring which encloses part of the gamma chain. CF(1) is attached to CF(0) by a central stalk formed by the gamma and epsilon chains, while a peripheral stalk is formed by the delta and b chains.

The protein resides in the cell membrane. It catalyses the reaction ATP + H2O + 4 H(+)(in) = ADP + phosphate + 5 H(+)(out). Produces ATP from ADP in the presence of a proton gradient across the membrane. The catalytic sites are hosted primarily by the beta subunits. This Bifidobacterium animalis subsp. lactis (strain AD011) protein is ATP synthase subunit beta.